Reading from the N-terminus, the 329-residue chain is uncharacterized protein (329 aa).

2 helical membrane-spanning segments follow: residues 13–35 (IPVL…WATI) and 229–248 (VIPA…SVVY).

The protein resides in the cell membrane. This is an uncharacterized protein from Archaeoglobus fulgidus (strain ATCC 49558 / DSM 4304 / JCM 9628 / NBRC 100126 / VC-16).